The sequence spans 85 residues: Large ribosomal subunit protein bL27 (85 aa).

The protein belongs to the bacterial ribosomal protein bL27 family.

The chain is Large ribosomal subunit protein bL27 from Mycobacteroides abscessus (strain ATCC 19977 / DSM 44196 / CCUG 20993 / CIP 104536 / JCM 13569 / NCTC 13031 / TMC 1543 / L948) (Mycobacterium abscessus).